Here is a 170-residue protein sequence, read N- to C-terminus: Arginine repressor (170 aa).

The protein belongs to the ArgR family.

The protein localises to the cytoplasm. Its pathway is amino-acid biosynthesis; L-arginine biosynthesis [regulation]. Regulates arginine biosynthesis genes. The chain is Arginine repressor from Bifidobacterium longum (strain DJO10A).